Consider the following 421-residue polypeptide: Lipid II:glycine glycyltransferase (421 aa).

Belongs to the FemABX family. As to quaternary structure, monomer.

Its subcellular location is the cytoplasm. It catalyses the reaction beta-D-GlcNAc-(1-&gt;4)-Mur2Ac(oyl-L-Ala-D-isoglutaminyl-L-Lys-D-Ala-D-Ala)-di-trans,octa-cis-undecaprenyl diphosphate + glycyl-tRNA(Gly) = beta-D-GlcNAc-(1-&gt;4)-Mur2Ac(oyl-L-Ala-D-isoglutaminyl-L-Lys-(N(6)-Gly)-D-Ala-D-Ala)-di-trans,octa-cis-undecaprenyl diphosphate + tRNA(Gly) + H(+). In terms of biological role, catalyzes the incorporation of the first glycine of the pentaglycine interpeptide bridge, which is characteristic of the S.aureus peptidoglycan. This glycine is added to the epsilon-amino group of the L-lysine of the membrane-bound lipid II intermediate (GlcNAc-(beta-1,4)-N-acetylmuramic acid(-L-Ala-D-iGln-L-Lys-D-Ala-D-Ala)-pyrophosphoryl-undecaprenol), using glycyl-tRNA(Gly) as donor, in a ribosome-independent mechanism. Involved in methicillin resistance. The sequence is that of Lipid II:glycine glycyltransferase (femX) from Staphylococcus aureus (strain COL).